We begin with the raw amino-acid sequence, 968 residues long: RNA polymerase-associated protein RapA (968 aa).

The 170-residue stretch at 163 to 332 (EVGRRFAPRV…FARLRLLDPD (170 aa)) folds into the Helicase ATP-binding domain. 176 to 183 (DEVGLGKT) contacts ATP. A DEAH box motif is present at residues 278–281 (DEAH). The region spanning 491 to 645 (RVDWLIDFLK…TCPSGHILFN (155 aa)) is the Helicase C-terminal domain.

Belongs to the SNF2/RAD54 helicase family. RapA subfamily. Interacts with the RNAP. Has a higher affinity for the core RNAP than for the holoenzyme. Its ATPase activity is stimulated by binding to RNAP.

In terms of biological role, transcription regulator that activates transcription by stimulating RNA polymerase (RNAP) recycling in case of stress conditions such as supercoiled DNA or high salt concentrations. Probably acts by releasing the RNAP, when it is trapped or immobilized on tightly supercoiled DNA. Does not activate transcription on linear DNA. Probably not involved in DNA repair. This is RNA polymerase-associated protein RapA from Shewanella woodyi (strain ATCC 51908 / MS32).